The sequence spans 348 residues: Ion-translocating oxidoreductase complex subunit D (348 aa).

5 helical membrane passes run 15–35, 36–56, 67–87, 88–108, and 125–145; these read LTAK…GMQA, YFFG…AVAI, LTAF…LAMS, IPPY…LLLA, and VAYA…LVPI. Thr-186 is modified (FMN phosphoryl threonine). 5 consecutive transmembrane segments (helical) span residues 212-232, 241-261, 265-285, 298-318, and 320-340; these read LFAN…LLLI, IPAA…LLLP, LNVV…FIAT, LIFG…GNYP, and AVAF…HYTQ.

The protein belongs to the NqrB/RnfD family. The complex is composed of six subunits: RnfA, RnfB, RnfC, RnfD, RnfE and RnfG. The cofactor is FMN.

It is found in the cell inner membrane. Part of a membrane-bound complex that couples electron transfer with translocation of ions across the membrane. This is Ion-translocating oxidoreductase complex subunit D from Actinobacillus pleuropneumoniae serotype 7 (strain AP76).